The primary structure comprises 444 residues: 23S rRNA (uracil(1939)-C(5))-methyltransferase RlmD (444 aa).

The TRAM domain maps to 5 to 67; that stretch reads RSRIDRTPFQ…RHFDEARTVE (63 aa). Residues Cys-80, Cys-86, Cys-89, and Cys-168 each coordinate [4Fe-4S] cluster. 6 residues coordinate S-adenosyl-L-methionine: Gln-276, Phe-305, Asn-310, Glu-326, Asp-353, and Asp-374. Cys-400 serves as the catalytic Nucleophile.

The protein belongs to the class I-like SAM-binding methyltransferase superfamily. RNA M5U methyltransferase family. RlmD subfamily.

It catalyses the reaction uridine(1939) in 23S rRNA + S-adenosyl-L-methionine = 5-methyluridine(1939) in 23S rRNA + S-adenosyl-L-homocysteine + H(+). Catalyzes the formation of 5-methyl-uridine at position 1939 (m5U1939) in 23S rRNA. The polypeptide is 23S rRNA (uracil(1939)-C(5))-methyltransferase RlmD (Stenotrophomonas maltophilia (strain R551-3)).